The primary structure comprises 126 residues: C-type natriuretic peptide (126 aa).

Positions 1–23 are cleaved as a signal peptide; the sequence is MHLSQLLACALLLTLLSLRPSEA. Residues 19–72 are disordered; that stretch reads RPSEAKPGAPPKVPRTPPGEEVAEPQAAGGGQKKGDKTPGGGGANLKGDRSRLL. A propeptide spanning residues 24–73 is cleaved from the precursor; sequence KPGAPPKVPRTPPGEEVAEPQAAGGGQKKGDKTPGGGGANLKGDRSRLLR. Over residues 26-35 the composition is skewed to pro residues; the sequence is GAPPKVPRTP. A compositionally biased stretch (gly residues) spans 46–63; the sequence is AGGGQKKGDKTPGGGGAN. A disulfide bridge connects residues C110 and C126.

This sequence belongs to the natriuretic peptide family. In terms of processing, degraded by IDE (in vitro).

The protein localises to the secreted. In terms of biological role, hormone which plays a role in endochondral ossification through regulation of cartilaginous growth plate chondrocytes proliferation and differentiation. May also be vasoactive and natriuretic. Acts by specifically binding and stimulating NPR2 to produce cGMP. Binds the clearance receptor NPR3. In Sus scrofa (Pig), this protein is C-type natriuretic peptide (NPPC).